We begin with the raw amino-acid sequence, 215 residues long: Large ribosomal subunit protein uL4 (215 aa).

The interval 46 to 72 (TAKSKNRAEVSGGGRKPWAQKGGGRAR) is disordered. The span at 56 to 71 (SGGGRKPWAQKGGGRA) shows a compositional bias: gly residues.

The protein belongs to the universal ribosomal protein uL4 family. In terms of assembly, part of the 50S ribosomal subunit.

In terms of biological role, one of the primary rRNA binding proteins, this protein initially binds near the 5'-end of the 23S rRNA. It is important during the early stages of 50S assembly. It makes multiple contacts with different domains of the 23S rRNA in the assembled 50S subunit and ribosome. Forms part of the polypeptide exit tunnel. The sequence is that of Large ribosomal subunit protein uL4 from Helicobacter pylori (strain G27).